A 294-amino-acid polypeptide reads, in one-letter code: Probable 2-(5''-triphosphoribosyl)-3'-dephosphocoenzyme-A synthase (294 aa).

Belongs to the CitG/MdcB family.

It carries out the reaction 3'-dephospho-CoA + ATP = 2'-(5''-triphospho-alpha-D-ribosyl)-3'-dephospho-CoA + adenine. This is Probable 2-(5''-triphosphoribosyl)-3'-dephosphocoenzyme-A synthase from Streptococcus pyogenes serotype M18 (strain MGAS8232).